The following is a 303-amino-acid chain: tRNA dimethylallyltransferase (303 aa).

Residue 12–19 (GTTASGKS) participates in ATP binding. A substrate-binding site is contributed by 14–19 (TASGKS). Residues 37 to 40 (DSRQ) are interaction with substrate tRNA.

It belongs to the IPP transferase family. In terms of assembly, monomer. It depends on Mg(2+) as a cofactor.

It catalyses the reaction adenosine(37) in tRNA + dimethylallyl diphosphate = N(6)-dimethylallyladenosine(37) in tRNA + diphosphate. Its function is as follows. Catalyzes the transfer of a dimethylallyl group onto the adenine at position 37 in tRNAs that read codons beginning with uridine, leading to the formation of N6-(dimethylallyl)adenosine (i(6)A). The polypeptide is tRNA dimethylallyltransferase (Synechocystis sp. (strain ATCC 27184 / PCC 6803 / Kazusa)).